A 503-amino-acid polypeptide reads, in one-letter code: Alpha-1-syntrophin (503 aa).

PH domains follow at residues 6-263 and 287-399; these read RAPR…AQIG and DIKQ…DGCH. Residues 40 to 68 are disordered; it reads LTVSPADGEPGPEPEPAQLNGAAEPGAAP. Positions 81-164 constitute a PDZ domain; the sequence is RVTVRKADAG…EVVLEVKYMK (84 aa). Phosphoserine is present on residues serine 95, serine 178, serine 183, serine 187, and serine 194. The disordered stretch occupies residues 177–203; sequence TSVGWDSPPASPLQRQPSSPGPQPRNL. The region spanning 447–503 is the SU domain; the sequence is PFEKLQMSSDDGTSLLFLDFGGAEGEIQLDLHSCPKTMVFIIHSFLSAKVTRLGLLA. A calmodulin-binding region spans residues 481 to 503; it reads PKTMVFIIHSFLSAKVTRLGLLA.

Belongs to the syntrophin family. As to quaternary structure, monomer and homodimer. Interacts with MAPK12, TGFA, GA and F-actin. Interacts with the other members of the syntrophin family: SNTB1 and SNTB2; with dystrophin protein DMD and related proteins DTNA and UTRN; SGCG and SGCA of the dystrophin glycoprotein complex; NOS1; GRB2; calmodulin and the sodium channel proteins SCN4A and SCN5A. Interacts with MYOC; regulates muscle hypertrophy. Interacts with DTNB. Post-translationally, phosphorylated by CaM-kinase II. Phosphorylation may inhibit the interaction with DMD. High expression in skeletal muscle. Expressed at intermediate level in heart, kidney and brain, and at low level in intestine, liver, lung and testis.

Its subcellular location is the cell membrane. It is found in the sarcolemma. The protein resides in the cell junction. It localises to the cytoplasm. The protein localises to the cytoskeleton. Functionally, adapter protein that binds to and probably organizes the subcellular localization of a variety of membrane proteins. May link various receptors to the actin cytoskeleton and the extracellular matrix via the dystrophin glycoprotein complex. Plays an important role in synapse formation and in the organization of UTRN and acetylcholine receptors at the neuromuscular synapse. Binds to phosphatidylinositol 4,5-bisphosphate. The protein is Alpha-1-syntrophin (Snta1) of Mus musculus (Mouse).